A 217-amino-acid polypeptide reads, in one-letter code: Somatotropin (217 aa).

The signal sequence occupies residues 1–26 (MAAGSRTSLLLAFALLCLPWLQEGSA). Residue histidine 44 participates in Zn(2+) binding. A disulfide bond links cysteine 79 and cysteine 191. Serine 132 carries the phosphoserine modification. Glutamate 200 is a binding site for Zn(2+). Cysteine 208 and cysteine 215 are joined by a disulfide.

It belongs to the somatotropin/prolactin family.

Its subcellular location is the secreted. Plays an important role in growth control. Its major role in stimulating body growth is to stimulate the liver and other tissues to secrete IGF1. It stimulates both the differentiation and proliferation of myoblasts. It also stimulates amino acid uptake and protein synthesis in muscle and other tissues. This Macaca mulatta (Rhesus macaque) protein is Somatotropin (GH1).